A 406-amino-acid polypeptide reads, in one-letter code: Na(+)/H(+) antiporter NhaA (406 aa).

Transmembrane regions (helical) follow at residues Phe29–Phe49, Phe75–Met95, Ile111–Phe131, Gly141–Ser161, Ala170–Phe190, Ile195–Tyr215, Gln220–Ile240, Gly242–Asn262, Tyr278–Phe298, Ile306–Met326, Phe349–Ile369, and Ala382–Cys402.

Belongs to the NhaA Na(+)/H(+) (TC 2.A.33) antiporter family.

The protein localises to the cell inner membrane. The enzyme catalyses Na(+)(in) + 2 H(+)(out) = Na(+)(out) + 2 H(+)(in). Functionally, na(+)/H(+) antiporter that extrudes sodium in exchange for external protons. This is Na(+)/H(+) antiporter NhaA from Rickettsia massiliae (strain Mtu5).